Consider the following 354-residue polypeptide: Coiled-coil domain-containing protein 86 (354 aa).

Positions 1 to 354 are disordered; sequence MDTPLRRSRR…QPPQRPATKV (354 aa). 2 positions are modified to phosphoserine: Ser-18 and Ser-24. Positions 31 to 44 are enriched in basic and acidic residues; sequence VLVEFESNPKETGE. 2 positions are modified to phosphoserine: Ser-47 and Ser-53. Positions 49 to 58 are enriched in low complexity; sequence PGLGSPSRQP. Residue Thr-60 is modified to Phosphothreonine. Phosphoserine occurs at positions 61, 64, 75, 86, 105, 108, 123, and 183. Residues 97–107 are compositionally biased toward polar residues; the sequence is FPQNQPESSPE. The segment covering 199 to 211 has biased composition (basic and acidic residues); that stretch reads PAREGPAPKKREG. A phosphoserine mark is found at Ser-212 and Ser-213. Basic residues predominate over residues 232–248; it reads GKPKSGRVWKDRSKKRF. Basic and acidic residues-rich tracts occupy residues 267 to 289 and 297 to 311; these read DRQERKLAKDFARHLEEEKERRR and AENLRRRLENERKAE. A coiled-coil region spans residues 274-317; it reads AKDFARHLEEEKERRRQEKKKRRAENLRRRLENERKAEIVQVIR. The segment covering 320 to 330 has biased composition (basic residues); sequence AKLKRAKKKQL. Arg-336 bears the Citrulline mark.

In terms of processing, citrullinated by PADI4.

The protein resides in the nucleus. It localises to the chromosome. Its subcellular location is the nucleolus. In terms of biological role, required for proper chromosome segregation during mitosis and error-free mitotic progression. The protein is Coiled-coil domain-containing protein 86 of Bos taurus (Bovine).